The primary structure comprises 402 residues: Odorant receptor 22c (402 aa).

The Cytoplasmic portion of the chain corresponds to 1 to 42 (MTDSGQPAIADHFYRIPRISGLIVGLWPQRIRGGGGRPWHAH). Residues 43–63 (LLFVFAFAMVVVGAVGEVSYG) form a helical membrane-spanning segment. The Extracellular portion of the chain corresponds to 64 to 73 (CVHLDNLVVA). A helical transmembrane segment spans residues 74–94 (LEAFCPGTTKAVCVLKLWVFF). At 95 to 134 (RSNRRWAELVQRLRAILWESRRQEAQRMLVGLATTANRLS) the chain is on the cytoplasmic side. A helical membrane pass occupies residues 135–155 (LLLLSSGTATNAAFTLQPLIM). Over 156–173 (GLYRWIVQLPGQTELPFN) the chain is Extracellular. A helical membrane pass occupies residues 174 to 194 (IILPSFAVQPGVFPLTYVLLT). At 195–201 (ASGACTV) the chain is on the cytoplasmic side. A helical membrane pass occupies residues 202-222 (FAFSFVDGFFICSCLYICGAF). Residues 223–276 (RLVQQDIRRIFADLHGDSVDVFTEEMNAEVRHRLAQVVERHNAIIDFCTDLTRQ) lie on the Extracellular side of the membrane. The helical transmembrane segment at 277–297 (FTVIVLMHFLSAAFVLCSTIL) threads the bilayer. The Cytoplasmic segment spans residues 298-307 (DIMLNTSSLS). A helical membrane pass occupies residues 308-328 (GLTYICYIIAALTQLFLYCFG). The Extracellular segment spans residues 329 to 402 (GNHVSESSAA…SYITLLKTFL (74 aa)).

It belongs to the insect chemoreceptor superfamily. Heteromeric odorant receptor channel (TC 1.A.69) family. Or1a subfamily. In terms of assembly, interacts with Orco. Complexes exist early in the endomembrane system in olfactory sensory neurons (OSNs), coupling these complexes to the conserved ciliary trafficking pathway. In terms of tissue distribution, not expressed in either the antenna or maxillary palp.

It is found in the cell membrane. Odorant receptor which mediates acceptance or avoidance behavior, depending on its substrates. The odorant receptor repertoire encodes a large collection of odor stimuli that vary widely in identity, intensity, and duration. May form a complex with Orco to form odorant-sensing units, providing sensitive and prolonged odorant signaling and calcium permeability. This chain is Odorant receptor 22c (Or22c), found in Drosophila melanogaster (Fruit fly).